Reading from the N-terminus, the 2380-residue chain is Probable polyketide synthase 25 (2380 aa).

Over residues 1–18 (MDNSYLNNPQFDINNGNK) the composition is skewed to polar residues. The segment at 1–29 (MDNSYLNNPQFDINNGNKEVTDDDNNKNN) is disordered. A Ketosynthase family 3 (KS3) domain is found at 31–457 (DNLVAIVGVG…GSNCCLVLSQ (427 aa)). Residues Cys-198, His-340, and His-380 each act as for beta-ketoacyl synthase activity in the active site. The interval 649-682 (GIKASFMLGHSLGEVTTAYCSGMIDIDQLCYLIY) is acyl/malonyl transferase. Ser-659 serves as the catalytic For acyl/malonyl transferase activity. The tract at residues 948–1070 (ISILGNSMQD…ANFQLYNNGK (123 aa)) is N-terminal hotdog fold. Residues 948–1234 (ISILGNSMQD…CTSLTPVKDP (287 aa)) enclose the PKS/mFAS DH domain. The active-site Proton acceptor; for dehydratase activity is His-982. Positions 1085–1234 (NLSSIPWDKF…CTSLTPVKDP (150 aa)) are C-terminal hotdog fold. The Proton donor; for dehydratase activity role is filled by Asp-1148. A Carrier domain is found at 2299–2376 (KNSTNIKDKF…MVCQIINDNF (78 aa)). O-(pantetheine 4'-phosphoryl)serine is present on Ser-2336.

Pantetheine 4'-phosphate is required as a cofactor.

Functionally, probable polyketide synthase. This chain is Probable polyketide synthase 25 (pks25), found in Dictyostelium discoideum (Social amoeba).